We begin with the raw amino-acid sequence, 314 residues long: Methionyl-tRNA formyltransferase (314 aa).

113 to 116 serves as a coordination point for (6S)-5,6,7,8-tetrahydrofolate; the sequence is SLLP.

This sequence belongs to the Fmt family.

It catalyses the reaction L-methionyl-tRNA(fMet) + (6R)-10-formyltetrahydrofolate = N-formyl-L-methionyl-tRNA(fMet) + (6S)-5,6,7,8-tetrahydrofolate + H(+). Attaches a formyl group to the free amino group of methionyl-tRNA(fMet). The formyl group appears to play a dual role in the initiator identity of N-formylmethionyl-tRNA by promoting its recognition by IF2 and preventing the misappropriation of this tRNA by the elongation apparatus. The protein is Methionyl-tRNA formyltransferase of Ectopseudomonas mendocina (strain ymp) (Pseudomonas mendocina).